Here is a 491-residue protein sequence, read N- to C-terminus: Trigger factor (491 aa).

The 86-residue stretch at 169–254 (GDRVTIDYLG…VKDVAAAAPI (86 aa)) folds into the PPIase FKBP-type domain. Residues 433-491 (KTVSKDELMAEDEAEDKPAKKAPAKKKAAAKAEAGEGEEAAAPKKKAPAKKKAADDSAE) form a disordered region. Residues 452-461 (KKAPAKKKAA) are compositionally biased toward basic residues.

The protein belongs to the FKBP-type PPIase family. Tig subfamily.

It localises to the cytoplasm. The enzyme catalyses [protein]-peptidylproline (omega=180) = [protein]-peptidylproline (omega=0). Involved in protein export. Acts as a chaperone by maintaining the newly synthesized protein in an open conformation. Functions as a peptidyl-prolyl cis-trans isomerase. This chain is Trigger factor, found in Sinorhizobium fredii (strain NBRC 101917 / NGR234).